We begin with the raw amino-acid sequence, 304 residues long: tRNA dimethylallyltransferase (304 aa).

9 to 16 is an ATP binding site; sequence APTAAGKS. 11–16 is a substrate binding site; it reads TAAGKS.

The protein belongs to the IPP transferase family. As to quaternary structure, monomer. Requires Mg(2+) as cofactor.

It carries out the reaction adenosine(37) in tRNA + dimethylallyl diphosphate = N(6)-dimethylallyladenosine(37) in tRNA + diphosphate. Functionally, catalyzes the transfer of a dimethylallyl group onto the adenine at position 37 in tRNAs that read codons beginning with uridine, leading to the formation of N6-(dimethylallyl)adenosine (i(6)A). The polypeptide is tRNA dimethylallyltransferase (Deinococcus geothermalis (strain DSM 11300 / CIP 105573 / AG-3a)).